The following is a 614-amino-acid chain: Maltose permease MAL31 (614 aa).

The disordered stretch occupies residues 1 to 48 (MKGLSSLINRKKDRNDSHLDEIENGVNATEFNSIEMEEQGKKSDFDLS). At 1 to 108 (MKGLSSLINR…AAAWSLLVST (108 aa)) the chain is on the cytoplasmic side. Basic and acidic residues predominate over residues 38–48 (EQGKKSDFDLS). The chain crosses the membrane as a helical span at residues 109–129 (TLIQEGYDTAILGAFYALPVF). Topologically, residues 130-144 (QKKYGSLNSNTGDYE) are extracellular. The helical transmembrane segment at 145-165 (ISVSWQIGLCLCYMAGEIVGL) threads the bilayer. At 166-180 (QMTGPSVDYMGNRYT) the chain is on the cytoplasmic side. A helical transmembrane segment spans residues 181-201 (LIMALFFLAAFIFILYFCKSL). Position 202 (G202) is a topological domain, extracellular. Residues 203-223 (MIAVGQALCGMPWGCFQCLTV) traverse the membrane as a helical segment. Over 224-236 (SYASEICPLALRY) the chain is Cytoplasmic. Residues 237–257 (YLTTYSNLCWAFGQLFAAGIM) traverse the membrane as a helical segment. The Extracellular segment spans residues 258–272 (KNSQNKYANSELGYK). Residues 273–293 (LPFALQWIWPLPLAVGIFFAP) traverse the membrane as a helical segment. At 294–364 (ESPWWLVKKG…KDGINRRRTR (71 aa)) the chain is on the cytoplasmic side. The helical transmembrane segment at 365-385 (IACLCWIGQCSCGASLIGYST) threads the bilayer. Topologically, residues 386–398 (YFYEKAGVSTDTA) are extracellular. The chain crosses the membrane as a helical span at residues 399 to 419 (FTFSIIQYCLGIAATFISWWA). At 420 to 427 (SKYCGRFD) the chain is on the cytoplasmic side. A helical transmembrane segment spans residues 428-448 (LYAFGLAFQAIMFFIIGGLGC). Over 449 to 460 (SDTHGAKMGSGA) the chain is Extracellular. A helical membrane pass occupies residues 461-481 (LLMVVAFFYNLGIAPVVFCLV). Residues 482–493 (SEIPSSRLRTKT) are Cytoplasmic-facing. The helical transmembrane segment at 494–514 (IILARNAYNVIQVVVTVLIMY) threads the bilayer. The Extracellular portion of the chain corresponds to 515-526 (QLNSEKWNWGAK). Residues 527–547 (SGFFWGGFCLATLAWAVVDLP) traverse the membrane as a helical segment. Residues 548–614 (ETAGRTFIEI…GRNTSSVVNK (67 aa)) are Cytoplasmic-facing. Residues 595–614 (EDLETSVVDEGRNTSSVVNK) are disordered.

The protein belongs to the major facilitator superfamily. Sugar transporter (TC 2.A.1.1) family.

It localises to the membrane. Its function is as follows. High-affinity uptake of maltose and maltotriose. Also transports turanose but not alpha-methylglucoside, melezitose or trehalose. The sequence is that of Maltose permease MAL31 (MAL31) from Saccharomyces cerevisiae (strain ATCC 204508 / S288c) (Baker's yeast).